Reading from the N-terminus, the 145-residue chain is Basic phospholipase A2 S2-22 (145 aa).

A signal peptide spans 1–19 (MYPAHLLVLLAVCVSLLGA). Positions 20-27 (SDIPPQPL) are excised as a propeptide. 7 cysteine pairs are disulfide-bonded: Cys38–Cys99, Cys54–Cys144, Cys56–Cys72, Cys71–Cys127, Cys78–Cys120, Cys88–Cys113, and Cys106–Cys118. Residues Tyr55, Gly57, and Gly59 each contribute to the Ca(2+) site. The active site involves His75. Position 76 (Asp76) interacts with Ca(2+). Asp121 is an active-site residue.

It belongs to the phospholipase A2 family. Group I subfamily. D49 sub-subfamily. Ca(2+) is required as a cofactor. In terms of tissue distribution, expressed by the venom gland.

It localises to the secreted. The catalysed reaction is a 1,2-diacyl-sn-glycero-3-phosphocholine + H2O = a 1-acyl-sn-glycero-3-phosphocholine + a fatty acid + H(+). Snake venom phospholipase A2 (PLA2) that inhibits collagen-induced platelet aggregation. PLA2 catalyzes the calcium-dependent hydrolysis of the 2-acyl groups in 3-sn-phosphoglycerides. This Austrelaps superbus (Lowland copperhead snake) protein is Basic phospholipase A2 S2-22.